The primary structure comprises 489 residues: Ammonium transporter Rh type C (489 aa).

Over 1–21 (MGNCADCLRGFFCPPKNTNIR) the chain is Cytoplasmic. A helical transmembrane segment spans residues 22 to 42 (ISLPAVCFVWQIAMIVLFGVF). The Extracellular segment spans residues 43–75 (IRYDAESDIRLWLQLKHTNNITSDIENDFYFRY). Asparagine 62 carries N-linked (GlcNAc...) asparagine glycosylation. The helical transmembrane segment at 76–96 (PSFQDVHVMIFVGFGFLMTFL) threads the bilayer. Residues 97–100 (KRYS) lie on the Cytoplasmic side of the membrane. A helical transmembrane segment spans residues 101–121 (FGGVGFNFLIGAFGLQWALLM). The Extracellular segment spans residues 122 to 140 (QGWFHALDPTTGKISIGVE). The chain crosses the membrane as a helical span at residues 141 to 161 (GLINADFCVAASLIAYGALLG). Topologically, residues 162 to 169 (KVSPVQLM) are cytoplasmic. The chain crosses the membrane as a helical span at residues 170–190 (VVTLFGVTLFAVEEYIILNLL). At 191–195 (HCRDA) the chain is on the extracellular side. A helical membrane pass occupies residues 196 to 216 (GGSMVIHCFGGYYGLTISWIL). Residues 217-235 (YRPKLHQSKRLNGSVYHSD) are Cytoplasmic-facing. Residues 236 to 256 (VFAMIGTLFLWMFWPSFNSAI) traverse the membrane as a helical segment. Topologically, residues 257–266 (TDHGSGQHRT) are extracellular. A helical transmembrane segment spans residues 267–287 (AINTYIALASSVLTTVAISSA). Over 288–298 (SEKRGKLDMVH) the chain is Cytoplasmic. The chain crosses the membrane as a helical span at residues 299 to 319 (IQNATLAGGVAMGTAAEFMIT). Position 320 (proline 320) is a topological domain, extracellular. A helical membrane pass occupies residues 321–341 (YGALIVGFCTGIISTFGYLFV). Topologically, residues 342–359 (SPFMEKYLKIQDTCGVHN) are cytoplasmic. Residues 360–380 (LHAMPGMLGGFIGAIVAAAAT) form a helical membrane-spanning segment. Topologically, residues 381-412 (EEVYSREGLIETFDFEGKFADRTVGTQGGFQA) are extracellular. Residues 413–433 (AGVCVAIAFAVVGGAVVGLIL) form a helical membrane-spanning segment. The Cytoplasmic segment spans residues 434–489 (RLPIWGDPADDNCFDDEVYWEVPEDEEGILPVLEYNNHMTHKHQDISESNFSVEQS).

The protein belongs to the ammonium transporter (TC 2.A.49) family. Rh subfamily. Homotrimer.

The protein localises to the apical cell membrane. Functionally, functions as an ammonia transporter. May play a role in the elimination of ammonia in the gill. The protein is Ammonium transporter Rh type C (rhcg) of Gasterosteus aculeatus (Three-spined stickleback).